A 401-amino-acid chain; its full sequence is Proline-rich protein 30 (401 aa).

Positions 69 to 80 (PGPHFSSDSNSD) are enriched in polar residues. Disordered regions lie at residues 69–93 (PGPH…PRSS), 129–191 (SSSL…RGAG), and 357–401 (QSPK…KSPS). Low complexity-rich tracts occupy residues 83–93 (PPHSSSHPRSS) and 129–147 (SSSL…QSPS). 2 stretches are compositionally biased toward polar residues: residues 148–186 (RLQD…SIKS) and 357–368 (QSPKPSQCSRSL).

This Mus musculus (Mouse) protein is Proline-rich protein 30 (Prr30).